The primary structure comprises 241 residues: Orotidine 5'-phosphate decarboxylase (241 aa).

Substrate contacts are provided by residues Asp-16, Lys-37, 64-73, Thr-128, Arg-190, Gln-199, Gly-219, and Arg-220; that span reads DLKFHDIPTT. Residue Lys-66 is the Proton donor of the active site.

It belongs to the OMP decarboxylase family. Type 1 subfamily. As to quaternary structure, homodimer.

The enzyme catalyses orotidine 5'-phosphate + H(+) = UMP + CO2. The protein operates within pyrimidine metabolism; UMP biosynthesis via de novo pathway; UMP from orotate: step 2/2. Functionally, catalyzes the decarboxylation of orotidine 5'-monophosphate (OMP) to uridine 5'-monophosphate (UMP). The protein is Orotidine 5'-phosphate decarboxylase of Prochlorococcus marinus (strain NATL2A).